Here is a 555-residue protein sequence, read N- to C-terminus: Connector enhancer of kinase suppressor of ras 3 (555 aa).

The region spanning 7–72 is the SAM domain; that stretch reads WSPKQVVDWT…LEAVDLLCAL (66 aa). Residues 80-174 form the CRIC domain; sequence NMKNLVLKLR…TAVQKDCLVA (95 aa). The PDZ domain maps to 211 to 293; the sequence is EVHLPNVRPG…GVVLLLKKRP (83 aa). Disordered stretches follow at residues 308–333, 348–391, and 518–538; these read RWKP…MDAS, PPPA…LDQE, and PFQE…ASSG. Residues 311–329 show a composition bias toward low complexity; the sequence is PPLVQTSPPPTTTQSPEST. Residues 325-546 enclose the DUF1170 domain; sequence SPESTMDASL…SGEPSLLVSW (222 aa). Phosphoserine occurs at positions 381 and 383.

The protein belongs to the CNKSR family. Interacts with epithelial sodium channel ENaC. Interacts directly with SCNN1A (ENaC subunit alpha) and SCNN1B (ENaC subunit beta) C-terminal tails. Interacts with ENaC regulatory proteins NEDD4L, RAF1 and SGK1.

It is found in the cytoplasm. The protein resides in the apical cell membrane. In terms of biological role, involved in transepithelial sodium transport. Regulates aldosterone-induced and epithelial sodium channel (ENaC)-mediated sodium transport through regulation of ENaC cell surface expression. Acts as a scaffold protein coordinating the assembly of an ENaC-regulatory complex (ERC). The protein is Connector enhancer of kinase suppressor of ras 3 (Cnksr3) of Rattus norvegicus (Rat).